We begin with the raw amino-acid sequence, 242 residues long: Outer membrane protein class 4 (242 aa).

An N-terminal signal peptide occupies residues 1-22 (MTKQLKLSALFVALLASGTAVA). A run of 7 repeats spans residues 69–70 (AP), 71–72 (EP), 73–74 (EP), 75–76 (EP), 77–78 (EP), 79–80 (AP), and 81–82 (AP). Residues 69-82 (APEPEPEPEPAPAP) are 7 X 2 AA tandem repeats of X-P. Residues 92 to 229 (YVDETISLSA…RVDVKIRSIV (138 aa)) form the OmpA-like domain. The cysteines at positions 191 and 214 are disulfide-linked.

It belongs to the outer membrane OOP (TC 1.B.6) superfamily. In terms of assembly, the C-terminus exists in a monomer-dimer equilibrium.

It is found in the cell outer membrane. This chain is Outer membrane protein class 4, found in Neisseria meningitidis serogroup B (strain ATCC BAA-335 / MC58).